The primary structure comprises 374 residues: Translocating chain-associated membrane protein 1 (374 aa).

Residues Met1–Cys29 lie on the Cytoplasmic side of the membrane. The helical transmembrane segment at Val30 to Phe50 threads the bilayer. Residues Val51–Gly76 lie on the Lumenal side of the membrane. An N-linked (GlcNAc...) asparagine glycan is attached at Asn56. A helical membrane pass occupies residues Ile77–Ile97. Residues Gln98 to Glu121 are Cytoplasmic-facing. Residues Ser117–His326 enclose the TLC domain. The chain crosses the membrane as a helical span at residues Ser122–Ser142. Residues Glu143 to Asn159 are Lumenal-facing. A helical membrane pass occupies residues Leu160–Phe180. Over Pro181–Asp192 the chain is Cytoplasmic. The chain crosses the membrane as a helical span at residues Ile193–Leu213. Asn214 is a topological domain (lumenal). The helical transmembrane segment at Leu215 to Ile235 threads the bilayer. Topologically, residues Ser236–Ser251 are cytoplasmic. A helical membrane pass occupies residues Leu252–Val272. Topologically, residues Gly273–Arg297 are lumenal. The chain crosses the membrane as a helical span at residues Ile298–Phe318. At Gln319–Ser374 the chain is on the cytoplasmic side. Over residues Val334–Lys347 the composition is skewed to basic residues. The segment at Val334–Ser374 is disordered. The span at Asn352–Ala363 shows a compositional bias: polar residues. Ser365 carries the post-translational modification Phosphoserine.

This sequence belongs to the TRAM family. As to quaternary structure, interacts with SEC61B. May interact with Derlin-1/DERL1. In terms of processing, N-glycosylated.

Its subcellular location is the endoplasmic reticulum membrane. Its function is as follows. Involved in the translocation of nascent protein chains into or through the endoplasmic reticulum (ER) membrane by facilitating the proper chain positioning at the SEC61 channel. Regulates the exposure of nascent secretory protein chain to the cytosol during translocation into the ER. May affect the phospholipid bilayer in the vicinity of the lateral gate of the SEC61 channel, thereby facilitating ER protein transport. Intimately associates with transmembrane (TM) domain of nascent membrane proteins during the entire integration process into the ER membrane. Associates with the second TM domain of G-protein-coupled receptor opsin/OPSD nascent chain in the ER membrane, which may facilitate its integration into the membrane. Under conditions of ER stress, participates in the disposal of misfolded ER membrane proteins during the unfolded protein response (UPR), an integrated stress response (ISR) pathway, by selectively retrotranslocating misfolded ER-membrane proteins from the ER into the cytosol where they are ubiquitinated and degraded by the proteasome. The polypeptide is Translocating chain-associated membrane protein 1 (TRAM1) (Pongo abelii (Sumatran orangutan)).